We begin with the raw amino-acid sequence, 280 residues long: 2-dehydro-3-deoxyphosphooctonate aldolase (280 aa).

The protein belongs to the KdsA family.

It localises to the cytoplasm. It catalyses the reaction D-arabinose 5-phosphate + phosphoenolpyruvate + H2O = 3-deoxy-alpha-D-manno-2-octulosonate-8-phosphate + phosphate. Its pathway is carbohydrate biosynthesis; 3-deoxy-D-manno-octulosonate biosynthesis; 3-deoxy-D-manno-octulosonate from D-ribulose 5-phosphate: step 2/3. It participates in bacterial outer membrane biogenesis; lipopolysaccharide biosynthesis. This Pseudomonas putida (strain W619) protein is 2-dehydro-3-deoxyphosphooctonate aldolase.